The following is a 1157-amino-acid chain: MSEPEVPFKVVAQFPYKSDYEDDLNFEKDQEIIVTSVEDAEWYFGEYQDSNGDVIEGIFPKSFVAVQGSEVGKEAESSPNTGSTEQRTIQPEVEQKDLPEPISPETKKETLSGPVPVPAATVPVPAATVPVPAATAVSAQVQHDSSSGNGERKVPMDSPKLKARLSMFNQDITEQVPLPKSTHLDLENIPVKKTIVADAPKYYVPPGIPTNDTSNLERKKSLKENEKKIVPEPINRAQVESGRIETENDQLKKDLPQMSLKERIALLQEQQRLQAAREEELLRKKAKLEQEHERSAVNKNEPYTETEEAEENEKTEPKPEFTPETEHNEEPQMELLAHKEITKTSREADEGTNDIEKEQFLDEYTKENQKVEESQADEARGENVAEESEIGYGHEDREGDNDEEKEEEDSEENRRAALRERMAKLSGASRFGAPVGFNPFGMASGVGNKPSEEPKKKQHKEKEEEEPEQLQELPRAIPVMPFVDPSSNPFFRKSNLSEKNQPTETKTLDPHATTEHEQKQEHGTHAYHNLAAVDNAHPEYSDHDSDEDTDDHEFEDANDGLRKHSMVEQAFQIGNNESENVNSGEKIYPQEPPISHRTAEVSHDIENSSQNTTGNVLPVSSPQTRVARNGSINSLTKSISGENRRKSINEYHDTVSTNSSALTETAQDISMAAPAAPVLSKVSHPEDKVPPHPVPSAPSAPPVPSAPSVPSAPPVPPAPPALSAPSVPPVPPVPPVSSAPPALSAPSIPPVPPTPPAPPAPPAPLALPKHNEVEEHVKSSAPLPPVSEEYHPMPNTAPPLPRAPPVPPATFEFDSEPTATHSHTAPSPPPHQNVTASTPSMMSTQQRVPTSVLSGAEKESRTLPPHVPSLTNRPVDSFHESDTTPKVASIRRSTTHDVGEISNNVKIEFNAQERWWINKSAPPAISNLKLNFLMEIDDHFISKRLHQKWVVRDFYFLFENYSQLRFSLTFNSTSPEKTVTTLQERFPSPVETQSARILDEYAQRFNAKVVEKSHSLINSHIGAKNFVSQIVSEFKDEVIQPIGARTFGATILSYKPEEGIEQLMKSLQKIKPGDILVIRKAKFEAHKKIGKNEIINVGMDSAAPYSSVVTDYDFTKNKFRVIENHEGKIIQNSYKLSHMKSGKLKVFRIVARGYVGW.

An SH3 domain is found at 5-69; sequence EVPFKVVAQF…PKSFVAVQGS (65 aa). 2 disordered regions span residues 68–116 and 135–156; these read GSEV…GPVP and TAVS…KVPM. Over residues 77–89 the composition is skewed to polar residues; that stretch reads SSPNTGSTEQRTI. Over residues 93-110 the composition is skewed to basic and acidic residues; that stretch reads VEQKDLPEPISPETKKET. Phosphoserine is present on serine 103. The segment covering 138 to 149 has biased composition (polar residues); that stretch reads SAQVQHDSSSGN. A phosphoserine mark is found at serine 158 and serine 166. 2 disordered regions span residues 231–256 and 284–888; these read PEPI…KDLP and KKAK…PKVA. 2 coiled-coil regions span residues 234 to 301 and 356 to 430; these read INRA…NKNE and EKEQ…GASR. 3 stretches are compositionally biased toward basic and acidic residues: residues 242 to 256, 284 to 296, and 312 to 383; these read GRIE…KDLP, KKAK…ERSA, and NEKT…RGEN. Acidic residues predominate over residues 398 to 411; the sequence is EGDNDEEKEEEDSE. Composition is skewed to basic and acidic residues over residues 412-423 and 506-524; these read ENRRAALRERMA and KTLD…EHGT. Over residues 544-558 the composition is skewed to acidic residues; sequence DSDEDTDDHEFEDAN. Phosphoserine is present on serine 565. Residues 574–585 are compositionally biased toward low complexity; that stretch reads GNNESENVNSGE. Residues 597 to 606 show a composition bias toward basic and acidic residues; that stretch reads RTAEVSHDIE. Over residues 607 to 641 the composition is skewed to polar residues; it reads NSSQNTTGNVLPVSSPQTRVARNGSINSLTKSISG. 3 positions are modified to phosphoserine: serine 621, serine 631, and serine 634. At threonine 636 the chain carries Phosphothreonine. Residues serine 638 and serine 647 each carry the phosphoserine modification. The span at 642-653 shows a compositional bias: basic and acidic residues; sequence ENRRKSINEYHD. Positions 654 to 668 are enriched in polar residues; that stretch reads TVSTNSSALTETAQD. Pro residues-rich tracts occupy residues 691-738 and 747-765; these read PHPV…PVSS and SIPP…PAPL. The segment covering 769 to 778 has biased composition (basic and acidic residues); it reads KHNEVEEHVK. The segment covering 795–808 has biased composition (pro residues); it reads NTAPPLPRAPPVPP. Polar residues predominate over residues 832–853; sequence QNVTASTPSMMSTQQRVPTSVL. A Phosphothreonine modification is found at threonine 850. Serine 889 carries the post-translational modification Phosphoserine. Residues threonine 894 and threonine 895 each carry the phosphothreonine modification. Lysine 1012 is covalently cross-linked (Glycyl lysine isopeptide (Lys-Gly) (interchain with G-Cter in ubiquitin)).

In terms of assembly, binds to the SH3 domains of the type I myosins MYO3 and MYO5.

The protein resides in the cytoplasm. Its subcellular location is the cytoskeleton. It localises to the actin patch. In terms of biological role, involved in the regulation of actin cytoskeleton. The chain is Myosin tail region-interacting protein MTI1 (BBC1) from Saccharomyces cerevisiae (strain ATCC 204508 / S288c) (Baker's yeast).